Here is a 447-residue protein sequence, read N- to C-terminus: MPDVTVVGGGLAGSEAAWQAARAGCRVELWEMRPVKETPAHHTDLFAELVCSNSLGNRSPETASGLLKEELRRLGSVILRCADANAVPAGGALGVAREDFARAVTETVGSHPNIEVVRREARDIPEGPAVIATGPLTSDALHRKIEELSGETLYFFDAASPILHRDSIDDSVVYRASRYGRGEADYLNCPMDEETYYAFVEELASAELSPIKKFEEDMYFEGCLPVETIARRGPDTLRFGPMKPVGLPDPRTGREPFAVVQLRQDDAEGRLYNIVGFQTRLRWGEQKRVFRMIPGLQRAEFARFGVMHRNTYLPSNRMLEATMKIRNALSERPLFFAGQLTGVEGYVESTAMGYIAGTNAARVARGLEPIRWPEGTMMGALARYITTKEGTLQPINSNWGLVPAPPKRENGRRLGRQERRRRQAEMALGVLERFAGEVLRPPVAAGR.

Gly-8–Gly-13 serves as a coordination point for FAD. The segment at Asn-398–Arg-421 is disordered. The span at Pro-406–Gln-417 shows a compositional bias: basic and acidic residues.

Belongs to the MnmG family. TrmFO subfamily. FAD serves as cofactor.

Its subcellular location is the cytoplasm. The enzyme catalyses uridine(54) in tRNA + (6R)-5,10-methylene-5,6,7,8-tetrahydrofolate + NADH + H(+) = 5-methyluridine(54) in tRNA + (6S)-5,6,7,8-tetrahydrofolate + NAD(+). It carries out the reaction uridine(54) in tRNA + (6R)-5,10-methylene-5,6,7,8-tetrahydrofolate + NADPH + H(+) = 5-methyluridine(54) in tRNA + (6S)-5,6,7,8-tetrahydrofolate + NADP(+). Catalyzes the folate-dependent formation of 5-methyl-uridine at position 54 (M-5-U54) in all tRNAs. This is Methylenetetrahydrofolate--tRNA-(uracil-5-)-methyltransferase TrmFO from Rubrobacter xylanophilus (strain DSM 9941 / JCM 11954 / NBRC 16129 / PRD-1).